A 691-amino-acid polypeptide reads, in one-letter code: NADH-ubiquinone oxidoreductase 75 kDa subunit (691 aa).

The region spanning 1–78 is the 2Fe-2S ferredoxin-type domain; it reads MVNVFVDGLS…NMKIFTNTPL (78 aa). Residues Cys34, Cys45, Cys48, and Cys62 each contribute to the [2Fe-2S] cluster site. One can recognise a 4Fe-4S His(Cys)3-ligated-type domain in the interval 78-117; it reads LVKKAREGVLEFLLVNHPLDCPICDQGGECDLQDLTMVYG. Positions 94, 98, 101, 107, 146, 149, 152, and 196 each coordinate [4Fe-4S] cluster. Residues 215–271 form the 4Fe-4S Mo/W bis-MGD-type domain; that stretch reads LQSTESIDVSDAIGSNIRIDVRGSEIMRILPRLNEDVNEEWISDKARFCYDGLKRQR.

It belongs to the complex I 75 kDa subunit family. As to quaternary structure, complex I is composed of about 30 different subunits. The cofactor is [2Fe-2S] cluster. Requires [4Fe-4S] cluster as cofactor.

The protein localises to the mitochondrion inner membrane. It catalyses the reaction a ubiquinone + NADH + 5 H(+)(in) = a ubiquinol + NAD(+) + 4 H(+)(out). Core subunit of the mitochondrial membrane respiratory chain NADH dehydrogenase (Complex I) that is believed to belong to the minimal assembly required for catalysis. Complex I functions in the transfer of electrons from NADH to the respiratory chain. The immediate electron acceptor for the enzyme is believed to be ubiquinone. This is the largest subunit of complex I and it is a component of the iron-sulfur (IP) fragment of the enzyme. It may form part of the active site crevice where NADH is oxidized. The chain is NADH-ubiquinone oxidoreductase 75 kDa subunit (NAD11) from Reclinomonas americana.